Reading from the N-terminus, the 432-residue chain is MTQLEYALSGIVTKEMRIVAEYEGVDEEFILEGVKKGEIVIPSNINHKNLIPKGIGRGLSTKVNANIGTSDAYPEIEKEIEKLNVAVKAGADAVMDLSTGGDINQSRRKILENSPVPVGTVPMYQAAVESISKYGSIVAMPEEFIFEVIEEQAKDGVDFITVHCGLTFESLKKLKDNGRVMDIVSRGGSFTIAWMLHNDKENPLYKHFDRLLDIAKKYDITLSLGDGLRPGCLEDATDSAQIQELIILGELVKRARKAGVQVMVEGPGHVPIDQIEANVKLQKQLCHNAPFYVLGPIVTDIAPGYDHITSAIGGAIAAASGADFLCYVTPAEHLGLPDKEDVKEGVIAAKIAAHAADIAKGVKGAKEKDLTMARARKALNWDEQIKLSIDPDKAFKYRINKNISTAKTCSMCGKFCAMKIVSEYLGTSAMTC.

Substrate contacts are provided by residues Asn-66, Met-95, Tyr-124, His-163, 185–187 (SRG), 226–229 (DGLR), and Glu-265. His-269 is a binding site for Zn(2+). Tyr-292 serves as a coordination point for substrate. Zn(2+) is bound at residue His-333. [4Fe-4S] cluster contacts are provided by Cys-409, Cys-412, and Cys-416.

This sequence belongs to the ThiC family. The cofactor is [4Fe-4S] cluster.

It catalyses the reaction 5-amino-1-(5-phospho-beta-D-ribosyl)imidazole + S-adenosyl-L-methionine = 4-amino-2-methyl-5-(phosphooxymethyl)pyrimidine + CO + 5'-deoxyadenosine + formate + L-methionine + 3 H(+). The protein operates within cofactor biosynthesis; thiamine diphosphate biosynthesis. Its function is as follows. Catalyzes the synthesis of the hydroxymethylpyrimidine phosphate (HMP-P) moiety of thiamine from aminoimidazole ribotide (AIR) in a radical S-adenosyl-L-methionine (SAM)-dependent reaction. The protein is Phosphomethylpyrimidine synthase of Thermoanaerobacter sp. (strain X514).